The sequence spans 780 residues: Cullin-5 (780 aa).

Residue Ser-34 is modified to Phosphoserine. Thr-210 bears the Phosphothreonine mark. Residues Arg-711–Asp-772 enclose the Cullin neddylation domain. A Glycyl lysine isopeptide (Lys-Gly) (interchain with G-Cter in NEDD8) cross-link involves residue Lys-724.

The protein belongs to the cullin family. In terms of assembly, component of multiple cullin-5-RING E3 ubiquitin-protein ligase complexes (ECS complexes, also named CRL5 complexes) formed of CUL5, Elongin BC (ELOB and ELOC), RNF7/RBX2 and a variable SOCS box domain-containing protein as substrate-specific recognition component. CUL5-containing ECS complexes specifically contain RNF7/RBX2, and not RBX1, as catalytic subunit. Component of the ECS(ASB2) complex with the substrate recognition component ASB2. Component of the ECS(ASB6) complex with the substrate recognition component ASB6. Component of the ECS(ASB7) complex with the substrate recognition component ASB7. Component of the ECS(ASB9) complex with the substrate recognition component ASB9. Component of the ECS(ASB11) complex with the substrate recognition component ASB11. Component of the ECS(ASB12) complex with the substrate recognition component ASB12. Component of the ECS(LRRC41) complex with the substrate recognition component LRRC41. Component of the ECS(SOCS1) complex with the substrate recognition component SOCS1. Component of the ECS(SOCS2) complex with the substrate recognition component SOCS2. Component of the ECS(WSB1) complex with the substrate recognition subunit WSB1. Component of the ECS(SOCS3) complex with the substrate recognition component SOCS3. Component of the ECS(SOCS7) complex with the substrate recognition component SOCS7. Component of the ECS(SPSB1) complex with the substrate recognition component SPSB1. Component of the ECS(SPSB3) complex with the substrate recognition component SPSB3. Component of the ECS(SPSB2) complex with the substrate recognition component SPSB2. Component of the ECS(SPSB4) complex with the substrate recognition component SPSB4. Component of the ECS(RAB40) complex with the substrate recognition subunit RAB40A, RAB40B or RAB40C. Component of the ECS(KLHDC1) complex with the substrate recognition component KLHDC1. Component of the ECS(PCMTD1) complex with the substrate recognition subunit PCMTD1. May also form complexes containing RBX1 and ELOA or VHL; additional evidence is however required to confirm this result in vivo. Interacts (when neddylated) with ARIH2; leading to activate the E3 ligase activity of ARIH2. Interacts with ERCC6; the interaction is induced by DNA damaging agents or inhibitors of RNA polymerase II elongation. Interacts with ELOA (via the BC-box). Interacts (unneddylated form) with DCUN1D1, DCUN1D2, DCUN1D3, DCUN1D4 and DCUN1D5; these interactions promote the cullin neddylation. (Microbial infection) Interacts (via the substrate recognition component) with HIV-1 Vif; forming an active cullin-5-RING E3 ubiquitin-protein ligase complex (ECS complex). As to quaternary structure, (Microbial infection) Interacts (via the substrate recognition component) with human adenovirus 5 proteins E1B-55K and E4-orf6. In terms of assembly, (Microbial infection) Interacts with herpes virus 8 protein LANA1; this interaction promotes the degradation of NF-kappa-B component RELA. (Microbial infection) Interacts with molluscum contagiosum virus protein MC132; this interaction promotes the degradation of NF-kappa-B component RELA. Neddylated; which enhances the ubiquitination activity of ECS complexes and prevents binding of the inhibitor CAND1. Deneddylated via its interaction with the COP9 signalosome (CSN).

The protein resides in the nucleus. It functions in the pathway protein modification; protein ubiquitination. Its function is as follows. Core component of multiple cullin-5-RING E3 ubiquitin-protein ligase complexes (ECS complexes, also named CRL5 complexes), which mediate the ubiquitination and subsequent proteasomal degradation of target proteins. Acts a scaffold protein that contributes to catalysis through positioning of the substrate and the ubiquitin-conjugating enzyme. The functional specificity of the E3 ubiquitin-protein ligase complex depends on the variable SOCS box-containing substrate recognition component. Acts as a key regulator of neuron positioning during cortex development: component of various SOCS-containing ECS complexes, such as the ECS(SOCS7) complex, that regulate reelin signaling by mediating ubiquitination and degradation of DAB1. ECS(SOCS1) seems to direct ubiquitination of JAK2. The ECS(SOCS2) complex mediates the ubiquitination and subsequent proteasomal degradation of phosphorylated EPOR and GHR. The ECS(SPSB3) complex catalyzes ubiquitination of nuclear CGAS. ECS(KLHDC1) complex is part of the DesCEND (destruction via C-end degrons) pathway and mediates ubiquitination and degradation of truncated SELENOS selenoprotein produced by failed UGA/Sec decoding, which ends with a glycine. The ECS(ASB9) complex mediates ubiquitination and degradation of CKB. As part of some ECS complex, promotes 'Lys-11'-linked ubiquitination and degradation of BTRC. As part of a multisubunit ECS complex, polyubiquitinates monoubiquitinated POLR2A. As part of the ECS(RAB40C) complex, mediates ANKRD28 ubiquitination and degradation, thereby inhibiting protein phosphatase 6 (PP6) complex activity and focal adhesion assembly during cell migration. As part of the ECS(RAB40A) complex, mediates RHOU 'Lys-48'-linked ubiquitination and degradation, thus inhibiting focal adhesion disassembly during cell migration. As part of the ECS(RAB40B) complex, mediates LIMA1/EPLIN and RAP2 ubiquitination, thereby regulating actin cytoskeleton dynamics and stress fiber formation during cell migration. May form a cell surface vasopressin receptor. Functionally, (Microbial infection) Following infection by HIV-1 virus, CUL5 associates with HIV-1 Vif proteins and forms a cullin-5-RING E3 ubiquitin-protein ligase complex (ECS complex) that catalyzes ubiquitination and degradation of APOBEC3F and APOBEC3G. The complex can also ubiquitinate APOBEC3H to some extent. (Microbial infection) Seems to be involved in proteasomal degradation of p53/TP53 stimulated by adenovirus E1B-55 kDa protein. This Homo sapiens (Human) protein is Cullin-5.